Consider the following 178-residue polypeptide: Cytochrome b6-f complex iron-sulfur subunit (178 aa).

The chain crosses the membrane as a helical span at residues 20–42 (LLTFGSVTGVALGALYPVVNYFI). The Rieske domain maps to 65–161 (ASGWLADHKE…VNVENDNVFV (97 aa)). Positions 107, 109, 125, and 128 each coordinate [2Fe-2S] cluster. An intrachain disulfide couples Cys112 to Cys127.

The protein belongs to the Rieske iron-sulfur protein family. In terms of assembly, the 4 large subunits of the cytochrome b6-f complex are cytochrome b6, subunit IV (17 kDa polypeptide, PetD), cytochrome f and the Rieske protein, while the 4 small subunits are PetG, PetL, PetM and PetN. The complex functions as a dimer. The cofactor is [2Fe-2S] cluster.

The protein resides in the cellular thylakoid membrane. It catalyses the reaction 2 oxidized [plastocyanin] + a plastoquinol + 2 H(+)(in) = 2 reduced [plastocyanin] + a plastoquinone + 4 H(+)(out). In terms of biological role, component of the cytochrome b6-f complex, which mediates electron transfer between photosystem II (PSII) and photosystem I (PSI), cyclic electron flow around PSI, and state transitions. The polypeptide is Cytochrome b6-f complex iron-sulfur subunit (Synechococcus sp. (strain RCC307)).